The sequence spans 667 residues: METLESELTCPICLELLEDPLLLPCAHSLCFNCAHRILVSHCATNEPVESINAFQCPTCRHVITLSQRGLDGLKRNVTLQNIIDRFQKASVSGPNSPSETRRERAFDANTMSSAEKVLCQFCDQDPAQDAVKTCVTCEVSYCDECLKATHPNKKPFTGHRLIEPIPDSHIRGLMCLEHEDEKVNMYCVTDDQLICALCKLVGRHRDHQVAALSERYDKLKQNLESNLTNLIKRNTELETLLAKLIQTCQHVEVNASRQEAKLTEECDLLIEIIQQRRQIIGTKIKEGKVIRLRKLAQQIANCKQCIERSASLISQAEHSLKENDHARFLQTAKNITERVSMATASSQVLIPEINLNDTFDTFALDFSREKKLLECLDYLTAPNPPTIREELCTASYDTITVHWTSDDEFSVVSYELQYTIFTGQANVVSLCNSADSWMIVPNIKQNHYTVHGLQSGTKYIFMVKAINQAGSRSSEPGKLKTNSQPFKLDPKSAHRKLKVSHDNLTVERDESSSKKSHTPERFTSQGSYGVAGNVFIDSGRHYWEVVISGSTWYAIGLAYKSAPKHEWIGKNSASWALCRCNNNWVVRHNSKEIPIEPAPHLRRVGILLDYDNGSIAFYDALNSIHLYTFDVALAQPVCPTFTVWNKCLTIITGLPIPDHLDCTEQLP.

Residues 10–60 form an RING-type zinc finger; that stretch reads CPICLELLEDPLLLPCAHSLCFNCAHRILVSHCATNEPVESINAFQCPTCR. Ser-92 and Ser-96 each carry phosphoserine. 2 B box-type zinc fingers span residues 116–165 and 172–212; these read KVLC…IEPI and GLMC…VAAL. Zn(2+) contacts are provided by Cys-119, Cys-122, Cys-134, Cys-137, Cys-142, Cys-145, His-150, His-159, Cys-175, His-178, Cys-198, and His-204. Residues 205-264 adopt a coiled-coil conformation; that stretch reads RDHQVAALSERYDKLKQNLESNLTNLIKRNTELETLLAKLIQTCQHVEVNASRQEAKLTE. Residues 320–379 form the COS domain; that stretch reads LKENDHARFLQTAKNITERVSMATASSQVLIPEINLNDTFDTFALDFSREKKLLECLDYL. The region spanning 381–484 is the Fibronectin type-III domain; sequence APNPPTIREE…EPGKLKTNSQ (104 aa). Residues 471–485 are compositionally biased toward polar residues; the sequence is SRSSEPGKLKTNSQP. Positions 471–524 are disordered; the sequence is SRSSEPGKLKTNSQPFKLDPKSAHRKLKVSHDNLTVERDESSSKKSHTPERFTS. In terms of domain architecture, B30.2/SPRY spans 482 to 659; sequence NSQPFKLDPK…IITGLPIPDH (178 aa). Residues 499 to 520 are compositionally biased toward basic and acidic residues; the sequence is VSHDNLTVERDESSSKKSHTPE. Ser-511 is subject to Phosphoserine.

Belongs to the TRIM/RBCC family. In terms of assembly, homodimer or heterodimer with MID2. Interacts with IGBP1.

Its subcellular location is the cytoplasm. The protein localises to the cytoskeleton. The enzyme catalyses S-ubiquitinyl-[E2 ubiquitin-conjugating enzyme]-L-cysteine + [acceptor protein]-L-lysine = [E2 ubiquitin-conjugating enzyme]-L-cysteine + N(6)-ubiquitinyl-[acceptor protein]-L-lysine.. Functionally, has E3 ubiquitin ligase activity towards IGBP1, promoting its monoubiquitination, which results in deprotection of the catalytic subunit of protein phosphatase PP2A, and its subsequent degradation by polyubiquitination. The chain is E3 ubiquitin-protein ligase Midline-1 (Mid1) from Mus spretus (Western Mediterranean mouse).